The sequence spans 415 residues: Histidine--tRNA ligase (415 aa).

The protein belongs to the class-II aminoacyl-tRNA synthetase family. Homodimer.

It is found in the cytoplasm. The catalysed reaction is tRNA(His) + L-histidine + ATP = L-histidyl-tRNA(His) + AMP + diphosphate + H(+). The chain is Histidine--tRNA ligase from Clostridium botulinum (strain ATCC 19397 / Type A).